The primary structure comprises 602 residues: Glutamine--fructose-6-phosphate aminotransferase [isomerizing] (602 aa).

C2 serves as the catalytic Nucleophile; for GATase activity. In terms of domain architecture, Glutamine amidotransferase type-2 spans 2–217 (CGIVGVVGNT…DQELVIVKAD (216 aa)). The disordered stretch occupies residues 67–87 (IGHTRWATHGKPTEDNAHPHR). A compositionally biased stretch (basic and acidic residues) spans 77-87 (KPTEDNAHPHR). SIS domains follow at residues 283 to 422 (IIKA…ANGN) and 455 to 592 (VREL…VDKP). K597 (for Fru-6P isomerization activity) is an active-site residue.

In terms of assembly, homodimer.

It localises to the cytoplasm. The enzyme catalyses D-fructose 6-phosphate + L-glutamine = D-glucosamine 6-phosphate + L-glutamate. Catalyzes the first step in hexosamine metabolism, converting fructose-6P into glucosamine-6P using glutamine as a nitrogen source. This chain is Glutamine--fructose-6-phosphate aminotransferase [isomerizing], found in Streptococcus pneumoniae (strain ATCC BAA-255 / R6).